A 157-amino-acid polypeptide reads, in one-letter code: Urease accessory protein UreE (157 aa).

It belongs to the UreE family.

It is found in the cytoplasm. Its function is as follows. Involved in urease metallocenter assembly. Binds nickel. Probably functions as a nickel donor during metallocenter assembly. This Corynebacterium glutamicum (strain R) protein is Urease accessory protein UreE.